A 957-amino-acid polypeptide reads, in one-letter code: Bifunctional glutamine synthetase adenylyltransferase/adenylyl-removing enzyme (957 aa).

Positions 1-449 are adenylyl removase; it reads MTQHLERPEL…VFDDIIGTDE (449 aa). The adenylyl transferase stretch occupies residues 457-957; that stretch reads SEQYNEMWTM…QEYLVPSSDE (501 aa).

The protein belongs to the GlnE family. It depends on Mg(2+) as a cofactor.

The catalysed reaction is [glutamine synthetase]-O(4)-(5'-adenylyl)-L-tyrosine + phosphate = [glutamine synthetase]-L-tyrosine + ADP. It carries out the reaction [glutamine synthetase]-L-tyrosine + ATP = [glutamine synthetase]-O(4)-(5'-adenylyl)-L-tyrosine + diphosphate. Involved in the regulation of glutamine synthetase GlnA, a key enzyme in the process to assimilate ammonia. When cellular nitrogen levels are high, the C-terminal adenylyl transferase (AT) inactivates GlnA by covalent transfer of an adenylyl group from ATP to specific tyrosine residue of GlnA, thus reducing its activity. Conversely, when nitrogen levels are low, the N-terminal adenylyl removase (AR) activates GlnA by removing the adenylyl group by phosphorolysis, increasing its activity. The regulatory region of GlnE binds the signal transduction protein PII (GlnB) which indicates the nitrogen status of the cell. The protein is Bifunctional glutamine synthetase adenylyltransferase/adenylyl-removing enzyme of Photobacterium profundum (strain SS9).